The primary structure comprises 509 residues: Coiled-coil domain-containing protein 181 (509 aa).

Basic and acidic residues predominate over residues 60–82 (EHTKQHSDPDKSLQDDVSPRRND). Disordered stretches follow at residues 60-121 (EHTK…EEDE) and 285-367 (GEPL…EEKE). The segment covering 320 to 334 (RTQSARISPVTSTYC) has biased composition (polar residues). Residues 335–375 (LSPRQKELQKQLEQKREKLKREEEQRKIEEEKEKKRENDIV) adopt a coiled-coil conformation. Basic and acidic residues predominate over residues 338–367 (RQKELQKQLEQKREKLKREEEQRKIEEEKE).

Belongs to the CCDC181 family. As to quaternary structure, homodimer. Interacts with HOOK1. Interacts with HOOK2. Interacts with HOOK3.

It is found in the cytoplasm. The protein resides in the cytoskeleton. The protein localises to the cell projection. Its subcellular location is the cilium. It localises to the flagellum. Its function is as follows. Microtubule-binding protein that localizes to the microtubular manchette of elongating spermatids. The chain is Coiled-coil domain-containing protein 181 from Macaca fascicularis (Crab-eating macaque).